We begin with the raw amino-acid sequence, 232 residues long: Peroxiredoxin (232 aa).

A Thioredoxin domain is found at 6 to 161; it reads PSIGEKFPEI…ILRLIESLQI (156 aa). Catalysis depends on cysteine 48, which acts as the Cysteine sulfenic acid (-SOH) intermediate. Arginine 124 serves as a coordination point for substrate. A disulfide bridge connects residues cysteine 203 and cysteine 209.

The protein belongs to the peroxiredoxin family. Prx6 subfamily. As to quaternary structure, homodecamer. Pentamer of dimers that assemble into a ring structure.

It is found in the cytoplasm. The catalysed reaction is a hydroperoxide + [thioredoxin]-dithiol = an alcohol + [thioredoxin]-disulfide + H2O. In terms of biological role, thiol-specific peroxidase that catalyzes the reduction of hydrogen peroxide and organic hydroperoxides to water and alcohols, respectively. Plays a role in cell protection against oxidative stress by detoxifying peroxides. The polypeptide is Peroxiredoxin (Hyperthermus butylicus (strain DSM 5456 / JCM 9403 / PLM1-5)).